We begin with the raw amino-acid sequence, 562 residues long: Protein wntless (562 aa).

Topologically, residues 1-13 are cytoplasmic; that stretch reads MSGTILENLSGRK. The chain crosses the membrane as a helical span at residues 14-34; sequence LSILVTTLLLCQVLCFLLGGL. At 35-239 the chain is on the lumenal side; that stretch reads YAPLPAGHVT…AIHQNGGFTQ (205 aa). N-linked (GlcNAc...) asparagine glycosylation is present at N58. A helical membrane pass occupies residues 240 to 260; that stretch reads IWLLLKTVLFPFVVGIMIWFW. Residues 261–270 lie on the Cytoplasmic side of the membrane; that stretch reads RRVHLLQRSP. Residues 271 to 291 form a helical membrane-spanning segment; sequence ALLEYMLIYLGAALTFLNLPL. The Lumenal portion of the chain corresponds to 292 to 311; the sequence is EYLSLVFEMPYMLLLSDIRQ. A helical membrane pass occupies residues 312-332; that stretch reads GIFYAMLLTFWLVFAGEHMLI. Residues 333–344 lie on the Cytoplasmic side of the membrane; that stretch reads QDAPNKSTIRSR. A helical transmembrane segment spans residues 345 to 365; it reads YWKHLSAVVVGCISLFVFDIC. Residues 366–390 are Lumenal-facing; it reads ERGVQLRNPFYSIWAMPLAAKMAMT. The helical transmembrane segment at 391-411 threads the bilayer; the sequence is FIVLAGVSAAIYFLFLCYMIW. The Cytoplasmic portion of the chain corresponds to 412 to 441; the sequence is KVFRNIGDKRTSLPSMSQARRLHYESLIYR. A helical membrane pass occupies residues 442–462; the sequence is FKFLMLATIVCAALTVTGFIM. At 463 to 482 the chain is on the lumenal side; sequence GQRAEGQWDWNDNVAIQPTS. Residues 483-503 traverse the membrane as a helical segment; that stretch reads AFLTGVYGMWNIYIFALLILY. Topologically, residues 504-562 are cytoplasmic; that stretch reads APSHKQWPTMHHSDETTQSNENIVASAASEEIEFSHLPSDSNPSEISSLTSFTRKVAFD. The disordered stretch occupies residues 539 to 562; the sequence is HLPSDSNPSEISSLTSFTRKVAFD. Over residues 541–556 the composition is skewed to polar residues; that stretch reads PSDSNPSEISSLTSFT.

This sequence belongs to the wntless family. Interacts with wg; in the Golgi. Interacts with Vps35, a component of the retromer complex; wls stability is regulated by Vps35.

Its subcellular location is the presynaptic cell membrane. The protein resides in the postsynaptic cell membrane. It localises to the cell membrane. It is found in the endoplasmic reticulum membrane. The protein localises to the endosome membrane. Its subcellular location is the golgi apparatus membrane. A segment polarity gene required for wingless (wg)-dependent patterning processes, acting in both wg-sending cells and wg-target cells. In non-neuronal cells wls directs wg secretion. The wls traffic loop encompasses the Golgi, the cell surface, an endocytic compartment and a retrograde route leading back to the Golgi, and involves clathrin-mediated endocytosis and the retromer complex (a conserved protein complex consisting of Vps35 and Vps26). In neuronal cells (the larval motorneuron NMJ), the wg signal moves across the synapse via the release of wls-containing exosome-like vesicles. Postsynaptic wls is required for the trafficking of fz2 through the fz2-interacting protein Grip. The polypeptide is Protein wntless (Drosophila erecta (Fruit fly)).